Consider the following 299-residue polypeptide: Protoheme IX farnesyltransferase (299 aa).

9 helical membrane-spanning segments follow: residues 27-47, 53-73, 97-117, 121-141, 149-169, 175-195, 222-242, 244-264, and 273-293; these read VVAL…HEHF, LIAL…NHLI, FNVL…LMLW, LTAY…TLYL, IVIA…SITG, AWLL…ALAI, ILLY…VGMA, YLYL…AIKL, and AIEM…ALLL.

It belongs to the UbiA prenyltransferase family. Protoheme IX farnesyltransferase subfamily.

The protein localises to the cell inner membrane. It catalyses the reaction heme b + (2E,6E)-farnesyl diphosphate + H2O = Fe(II)-heme o + diphosphate. It participates in porphyrin-containing compound metabolism; heme O biosynthesis; heme O from protoheme: step 1/1. Functionally, converts heme B (protoheme IX) to heme O by substitution of the vinyl group on carbon 2 of heme B porphyrin ring with a hydroxyethyl farnesyl side group. The sequence is that of Protoheme IX farnesyltransferase from Vibrio vulnificus (strain YJ016).